Here is a 777-residue protein sequence, read N- to C-terminus: Ribosome-releasing factor 2, mitochondrial (777 aa).

Residues 68-353 enclose the tr-type G domain; that stretch reads AKIRNIGIMA…AVTMYLPSPE (286 aa). GTP contacts are provided by residues 77 to 84, 141 to 145, and 195 to 198; these read AHIDAGKT, DTPGH, and NKMD.

This sequence belongs to the TRAFAC class translation factor GTPase superfamily. Classic translation factor GTPase family. EF-G/EF-2 subfamily.

It is found in the mitochondrion. It carries out the reaction GTP + H2O = GDP + phosphate + H(+). Mitochondrial GTPase that mediates the disassembly of ribosomes from messenger RNA at the termination of mitochondrial protein biosynthesis. Acts in collaboration with MRRF. GTP hydrolysis follows the ribosome disassembly and probably occurs on the ribosome large subunit. Not involved in the GTP-dependent ribosomal translocation step during translation elongation. The polypeptide is Ribosome-releasing factor 2, mitochondrial (Pongo abelii (Sumatran orangutan)).